The chain runs to 198 residues: NAD(P)H dehydrogenase (quinone) (198 aa).

Positions 4–189 (ILVLYYSMYG…SIARYQGEYV (186 aa)) constitute a Flavodoxin-like domain. FMN-binding positions include 10-15 (SMYGHI) and 78-80 (TRF). Tyr-12 contacts NAD(+). Trp-98 serves as a coordination point for substrate. Residues 113–118 (STGTGG) and His-133 contribute to the FMN site.

The protein belongs to the WrbA family. FMN serves as cofactor.

It carries out the reaction a quinone + NADH + H(+) = a quinol + NAD(+). It catalyses the reaction a quinone + NADPH + H(+) = a quinol + NADP(+). This Salmonella paratyphi B (strain ATCC BAA-1250 / SPB7) protein is NAD(P)H dehydrogenase (quinone).